Consider the following 414-residue polypeptide: Serine hydroxymethyltransferase (414 aa).

Residues L118 and 122-124 (GHL) each bind (6S)-5,6,7,8-tetrahydrofolate. K227 is subject to N6-(pyridoxal phosphate)lysine. Residues E240 and 350 to 352 (SPF) each bind (6S)-5,6,7,8-tetrahydrofolate.

Belongs to the SHMT family. As to quaternary structure, homodimer. Pyridoxal 5'-phosphate is required as a cofactor.

It localises to the cytoplasm. It catalyses the reaction (6R)-5,10-methylene-5,6,7,8-tetrahydrofolate + glycine + H2O = (6S)-5,6,7,8-tetrahydrofolate + L-serine. Its pathway is one-carbon metabolism; tetrahydrofolate interconversion. The protein operates within amino-acid biosynthesis; glycine biosynthesis; glycine from L-serine: step 1/1. In terms of biological role, catalyzes the reversible interconversion of serine and glycine with tetrahydrofolate (THF) serving as the one-carbon carrier. This reaction serves as the major source of one-carbon groups required for the biosynthesis of purines, thymidylate, methionine, and other important biomolecules. Also exhibits THF-independent aldolase activity toward beta-hydroxyamino acids, producing glycine and aldehydes, via a retro-aldol mechanism. The chain is Serine hydroxymethyltransferase from Bacillus cereus (strain ZK / E33L).